The following is a 99-amino-acid chain: Translation initiation factor 1A (99 aa).

The region spanning 11 to 84 is the S1-like domain; the sequence is RRVRTPRRGE…EKADIVWRYT (74 aa).

The protein belongs to the eIF-1A family.

Its function is as follows. Seems to be required for maximal rate of protein biosynthesis. Enhances ribosome dissociation into subunits and stabilizes the binding of the initiator Met-tRNA(I) to 40 S ribosomal subunits. This chain is Translation initiation factor 1A (eIF1A), found in Methanothermobacter thermautotrophicus (strain ATCC 29096 / DSM 1053 / JCM 10044 / NBRC 100330 / Delta H) (Methanobacterium thermoautotrophicum).